Consider the following 90-residue polypeptide: TSPNINGFWVMLENDEQIEFPIKPLIDHARPTFRQIMSRFSDLAEAYIEKRNFERAYMPRYGLQRNLTDMSLRRYAFDFYEMTSKAPARA.

This sequence belongs to the potyviridae genome polyprotein family. Post-translationally, genome polyprotein of potyviruses undergoes post-translational proteolytic processing by the main proteinase NIa-pro resulting in the production of at least ten individual proteins. The P1 proteinase and the HC-pro cleave only their respective C-termini autocatalytically. 6K1 is essential for proper proteolytic separation of P3 from CI.

The protein resides in the virion. Functionally, involved in aphid transmission, cell-to-cell and systemis movement, encapsidation of the viral RNA and in the regulation of viral RNA amplification. This Gloriosa stripe mosaic virus (GSMV) protein is Genome polyprotein.